A 355-amino-acid polypeptide reads, in one-letter code: Holliday junction branch migration complex subunit RuvB (355 aa).

The tract at residues 1-193 (MGRFSEDSAD…FGFTAHMDFY (193 aa)) is large ATPase domain (RuvB-L). ATP is bound by residues Leu-32, Arg-33, Gly-74, Lys-77, Thr-78, Ser-79, 140 to 142 (EDF), Arg-183, Tyr-193, and Arg-230. A Mg(2+)-binding site is contributed by Thr-78. A small ATPAse domain (RuvB-S) region spans residues 194 to 264 (EPSELERVLA…IAKYALEVYD (71 aa)). The segment at 267–355 (ELGLDRLDRA…VGLGQTGLFD (89 aa)) is head domain (RuvB-H). Positions 322 and 327 each coordinate DNA.

This sequence belongs to the RuvB family. Homohexamer. Forms an RuvA(8)-RuvB(12)-Holliday junction (HJ) complex. HJ DNA is sandwiched between 2 RuvA tetramers; dsDNA enters through RuvA and exits via RuvB. An RuvB hexamer assembles on each DNA strand where it exits the tetramer. Each RuvB hexamer is contacted by two RuvA subunits (via domain III) on 2 adjacent RuvB subunits; this complex drives branch migration. In the full resolvosome a probable DNA-RuvA(4)-RuvB(12)-RuvC(2) complex forms which resolves the HJ.

Its subcellular location is the cytoplasm. It catalyses the reaction ATP + H2O = ADP + phosphate + H(+). Functionally, the RuvA-RuvB-RuvC complex processes Holliday junction (HJ) DNA during genetic recombination and DNA repair, while the RuvA-RuvB complex plays an important role in the rescue of blocked DNA replication forks via replication fork reversal (RFR). RuvA specifically binds to HJ cruciform DNA, conferring on it an open structure. The RuvB hexamer acts as an ATP-dependent pump, pulling dsDNA into and through the RuvAB complex. RuvB forms 2 homohexamers on either side of HJ DNA bound by 1 or 2 RuvA tetramers; 4 subunits per hexamer contact DNA at a time. Coordinated motions by a converter formed by DNA-disengaged RuvB subunits stimulates ATP hydrolysis and nucleotide exchange. Immobilization of the converter enables RuvB to convert the ATP-contained energy into a lever motion, pulling 2 nucleotides of DNA out of the RuvA tetramer per ATP hydrolyzed, thus driving DNA branch migration. The RuvB motors rotate together with the DNA substrate, which together with the progressing nucleotide cycle form the mechanistic basis for DNA recombination by continuous HJ branch migration. Branch migration allows RuvC to scan DNA until it finds its consensus sequence, where it cleaves and resolves cruciform DNA. The protein is Holliday junction branch migration complex subunit RuvB of Mycolicibacterium vanbaalenii (strain DSM 7251 / JCM 13017 / BCRC 16820 / KCTC 9966 / NRRL B-24157 / PYR-1) (Mycobacterium vanbaalenii).